A 747-amino-acid polypeptide reads, in one-letter code: Protein MTSS 2 (747 aa).

Residues 1–252 form the IMD domain; that stretch reads METAEKECGA…EQVIKDLKGS (252 aa). A coiled-coil region spans residues 135–159; that stretch reads EIKKKSSDTLKLQKKARKELLGKGD. Low complexity-rich tracts occupy residues 256–284, 321–332, and 349–367; these read WSYQ…SSSS, SSVSSHDSGFVS, and TSQK…TCQS. Disordered regions lie at residues 256–302, 318–441, 457–522, and 543–599; these read WSYQ…YSPS, ARLS…EEVS, LEHQ…RNSN, and PTAG…PTVP. A Phosphothreonine modification is found at threonine 260. Residue serine 264 is modified to Phosphoserine. A compositionally biased stretch (polar residues) spans 368–378; sequence VSECSSPTSDW. The segment covering 397–406 has biased composition (basic and acidic residues); it reads DRVELLRDTE. A Phosphoserine modification is found at serine 441. A compositionally biased stretch (low complexity) spans 466 to 479; sequence SLQYSSGYSTQTTT. Residues 480–492 show a composition bias toward polar residues; sequence PSCSEDTIPSQGS. Phosphoserine is present on residues serine 579, serine 601, serine 612, serine 624, serine 634, and serine 639. 2 disordered regions span residues 638-664 and 691-720; these read LSLP…EDEQ and GQFP…DPPA. Residue threonine 643 is modified to Phosphothreonine. Low complexity-rich tracts occupy residues 646–659 and 696–707; these read GSPS…PGAG and PTALSATPTEET. The WH2 domain occupies 719–736; the sequence is PAEDMLVAIRRGVRLRRT.

The protein belongs to the MTSS family. As to quaternary structure, interacts (via IMD domain) with RAC1; this interaction may be important to potentiate PDGF-induced RAC1 activation.

The protein localises to the cytoplasm. It localises to the cell projection. It is found in the ruffle. In terms of biological role, involved in plasma membrane dynamics. Potentiated PDGF-mediated formation of membrane ruffles and lamellipodia in fibroblasts, acting via RAC1 activation. May function in actin bundling. In Homo sapiens (Human), this protein is Protein MTSS 2.